Consider the following 219-residue polypeptide: uncharacterized protein (219 aa).

Helical transmembrane passes span 8–28 (MILFLLVGLAVVLSGCATLSV) and 194–214 (GIPGFEAALAIVGLLAAGLLF).

The protein resides in the cell membrane. This is an uncharacterized protein from Archaeoglobus fulgidus (strain ATCC 49558 / DSM 4304 / JCM 9628 / NBRC 100126 / VC-16).